Here is a 473-residue protein sequence, read N- to C-terminus: MKIKTRFAPSPTGYLHVGGARTALYSWLFARHLGGEFLLRIEDTDLERSTQPAIDAIMDGMNWLNLDWDEGPYFQTKRFDRYNAVIDDMLSKGTAYHCYCSKERLETLREAQMARGEKPRYDGRCRDSHEHHADDEPCVVRFRNPQDGSVVFNDLIRGPIEFSNQELDDLIIRRIDGSPTYNFCVVVDDFDMAITHVIRGEDHINNTPRQINILKALGAPVPAYAHVSMILGDDGKKLSKRHGAVGVMQYRDDGFLPEALLNYLVRLGWSHGDQEIFSVDEMKQLFSFEAVSKSASAFNTEKLLWLNHHYINHLPADYVATHLVLHIEQQGIDTRTGPQLAALVKLLGERCKTLKEIAASCRYFYEDFSEFDADAAKKHLRPVAVLALEAVRANLAALSEWTPATVHAAIEQTAEALQVGMGKVGMPLRVAVTGTGQSPALDVTVHAIGQSRCLARIVKALDFIACRTQESAG.

The 'HIGH' region motif lies at 9–19 (PSPTGYLHVGG). Zn(2+)-binding residues include cysteine 98, cysteine 100, cysteine 125, and aspartate 127. The short motif at 237–241 (KLSKR) is the 'KMSKS' region element. Lysine 240 lines the ATP pocket.

It belongs to the class-I aminoacyl-tRNA synthetase family. Glutamate--tRNA ligase type 1 subfamily. As to quaternary structure, monomer. Zn(2+) serves as cofactor.

It localises to the cytoplasm. The enzyme catalyses tRNA(Glu) + L-glutamate + ATP = L-glutamyl-tRNA(Glu) + AMP + diphosphate. In terms of biological role, catalyzes the attachment of glutamate to tRNA(Glu) in a two-step reaction: glutamate is first activated by ATP to form Glu-AMP and then transferred to the acceptor end of tRNA(Glu). This Sodalis glossinidius (strain morsitans) protein is Glutamate--tRNA ligase.